An 803-amino-acid polypeptide reads, in one-letter code: Volume-regulated anion channel subunit LRRC8B (803 aa).

Residues 1-25 (MITLTELKCLADAQSSYHILKPWWD) lie on the Cytoplasmic side of the membrane. The chain crosses the membrane as a helical span at residues 26–46 (VFWYYITLIMLLVAVLAGALQ). At 47 to 119 (LTQSRVLCCL…YEKQLHWFAK (73 aa)) the chain is on the extracellular side. 2 cysteine pairs are disulfide-bonded: cysteine 55-cysteine 304 and cysteine 109-cysteine 289. N-linked (GlcNAc...) asparagine glycosylation is present at asparagine 78. A helical transmembrane segment spans residues 120–140 (FFPYLVLLHTLIFAACSNFWL). Residues 141–261 (HYPSTSSRLE…DIIYRVYLKQ (121 aa)) are Cytoplasmic-facing. Phosphoserine is present on residues serine 186 and serine 196. The chain crosses the membrane as a helical span at residues 262 to 282 (IIVKVILFVLIITYVPYFLSY). Residues 283–307 (ITLEIDCSIDVQAFTGYKRYQCVYS) lie on the Extracellular side of the membrane. A helical membrane pass occupies residues 308 to 328 (LAEIFKVLASFYVILVMLYGL). Residues 329–803 (TSSYSLWWML…ERLQTCLDKC (475 aa)) are Cytoplasmic-facing. 15 LRR repeats span residues 415-439 (VKNSQDKVELHLFMLNGLPDNVFEL), 440-462 (TEMEVLSLELIPEVKLPAAVAQL), 464-486 (NLRELHVYHSSLVVDHPALAFLE), 488-509 (NLRILRLKFTEMGKIPRWVFHL), 511-532 (NLKELYLSGCVLPEQLSSLHLE), 539-559 (NLRTLYLKSSLSRIPQVVTDL), 562-582 (SLQKLSLDNEGSKLVVLNNLK), 586-607 (NLKSLELLSCDLERIPHSIFSL), 609-630 (NLHELDLKENNLKTVEEIISFQ), 634-655 (SLSCLKLWHNNIAYIPAQIGAL), 657-678 (NLEQLFLGHNNIESLPLQLFLC), 680-701 (KLHYLDLSYNHLTFIPEEIQYL), 703-724 (NLQYFAVTNNNIEMLPDGLFQC), 726-747 (KLQCLLLGRNSLTDLSPLVGEL), and 749-771 (NLTHLELTGNYLETLPVELEGCQ).

Belongs to the LRRC8 family. In terms of assembly, heterohexamer; oligomerizes with other LRRC8 proteins (LRRC8A, LRRC8C, LRRC8D and/or LRRC8E) to form a heterohexamer. In vivo, the subunit composition may depend primarily on expression levels, and heterooligomeric channels containing various proportions of the different LRRC8 proteins may coexist.

The protein localises to the cell membrane. The protein resides in the endoplasmic reticulum membrane. It carries out the reaction chloride(in) = chloride(out). It catalyses the reaction iodide(out) = iodide(in). The enzyme catalyses taurine(out) = taurine(in). Non-essential component of the volume-regulated anion channel (VRAC, also named VSOAC channel), an anion channel required to maintain a constant cell volume in response to extracellular or intracellular osmotic changes. The VRAC channel conducts iodide better than chloride and can also conduct organic osmolytes like taurine. Channel activity requires LRRC8A plus at least one other family member (LRRC8B, LRRC8C, LRRC8D or LRRC8E); channel characteristics depend on the precise subunit composition. The polypeptide is Volume-regulated anion channel subunit LRRC8B (Mus musculus (Mouse)).